A 623-amino-acid chain; its full sequence is Cilia- and flagella-associated protein 52 (623 aa).

WD repeat units follow at residues 65-109 (GHGN…LMAR), 112-153 (LHKG…AICG), 159-198 (LNVGNATTVIFSKCRDEMFVTAGNGTIRVWELDLPNRKIW), 291-330 (QLQGGITSITLRGEGHQFFVGTEESHIYRVNFTNFKETLI), 333-372 (CHFESVEDIVFPFGTAELFATCAKKDIRVWHTLTNRELLR), 375-414 (VPNMTCHGIDFMRDGKSIISAWDDGRIRAFAPETGRLMYV), 418-457 (AHRIGVTAIATTSDCKRVISGGGEGEVRVWHIGHQTQKLE), 462-501 (EHKSSVSCIRVKKSNEECVTASTDGTCIIWDLVRLRRNQM), 503-544 (LANT…RELD), 546-585 (SLSGAVNGMDITVEGVHFVTGGNDHLVKVWDYNEGEVTHV), and 588-623 (GHSGNITRIRISPGNQYIVSVSADGAILRWKYPFPS).

This sequence belongs to the CFAP52 family. As to quaternary structure, microtubule inner protein component of sperm flagellar doublet microtubules. Interacts with BRCA2. Interacts with the CCT chaperonin complex. Interacts with HSP70. Interacts with AK8. Interacts with CFAP45. Interacts with DNAI1. Interacts with IQDC. In terms of tissue distribution, expressed in trachea multiciliated cells.

It is found in the cytoplasm. It localises to the cytoskeleton. Its subcellular location is the cilium axoneme. The protein resides in the flagellum axoneme. Its function is as follows. Microtubule inner protein (MIP) part of the dynein-decorated doublet microtubules (DMTs) in cilia axoneme. Important for proper ciliary and flagellar beating. May act in cooperation with CFAP45 and axonemal dynein subunit DNAH11. May play a role in cell growth and/or survival. The chain is Cilia- and flagella-associated protein 52 (CFAP52) from Bos taurus (Bovine).